We begin with the raw amino-acid sequence, 352 residues long: Glycerol-1-phosphate dehydrogenase [NAD(P)+] (352 aa).

NAD(+)-binding positions include 98 to 102 (GKPID) and 120 to 123 (TAAS). Residue D125 participates in substrate binding. NAD(+) is bound at residue S129. D172 provides a ligand contact to substrate. Residues D172 and H252 each contribute to the Zn(2+) site. Substrate is bound at residue H256. A Zn(2+)-binding site is contributed by H268.

This sequence belongs to the glycerol-1-phosphate dehydrogenase family. Zn(2+) serves as cofactor.

It localises to the cytoplasm. The catalysed reaction is sn-glycerol 1-phosphate + NAD(+) = dihydroxyacetone phosphate + NADH + H(+). The enzyme catalyses sn-glycerol 1-phosphate + NADP(+) = dihydroxyacetone phosphate + NADPH + H(+). The protein operates within membrane lipid metabolism; glycerophospholipid metabolism. Catalyzes the NAD(P)H-dependent reduction of dihydroxyacetonephosphate (DHAP or glycerone phosphate) to glycerol 1-phosphate (G1P). The G1P thus generated is used as the glycerophosphate backbone of phospholipids in the cellular membranes of Archaea. In Natronomonas pharaonis (strain ATCC 35678 / DSM 2160 / CIP 103997 / JCM 8858 / NBRC 14720 / NCIMB 2260 / Gabara) (Halobacterium pharaonis), this protein is Glycerol-1-phosphate dehydrogenase [NAD(P)+].